Reading from the N-terminus, the 79-residue chain is ATP synthase subunit c (79 aa).

Transmembrane regions (helical) follow at residues 11-31 and 53-73; these read MAAA…IGIL and FFIV…LGLY.

Belongs to the ATPase C chain family. As to quaternary structure, F-type ATPases have 2 components, F(1) - the catalytic core - and F(0) - the membrane proton channel. F(1) has five subunits: alpha(3), beta(3), gamma(1), delta(1), epsilon(1). F(0) has three main subunits: a(1), b(2) and c(10-14). The alpha and beta chains form an alternating ring which encloses part of the gamma chain. F(1) is attached to F(0) by a central stalk formed by the gamma and epsilon chains, while a peripheral stalk is formed by the delta and b chains.

The protein localises to the cell inner membrane. F(1)F(0) ATP synthase produces ATP from ADP in the presence of a proton or sodium gradient. F-type ATPases consist of two structural domains, F(1) containing the extramembraneous catalytic core and F(0) containing the membrane proton channel, linked together by a central stalk and a peripheral stalk. During catalysis, ATP synthesis in the catalytic domain of F(1) is coupled via a rotary mechanism of the central stalk subunits to proton translocation. Functionally, key component of the F(0) channel; it plays a direct role in translocation across the membrane. A homomeric c-ring of between 10-14 subunits forms the central stalk rotor element with the F(1) delta and epsilon subunits. In Pectobacterium atrosepticum (strain SCRI 1043 / ATCC BAA-672) (Erwinia carotovora subsp. atroseptica), this protein is ATP synthase subunit c.